Here is a 529-residue protein sequence, read N- to C-terminus: MTKDIHQHRILILDFGSQYTQLIARRVREIGVYCELWAWDVTEEQMREFNPSGIILSGGPESVTEAGSPRAPEYVFNAGVPVFGICYGMQTMAEQLGGKVQSSTEREFGYAKVEVLGNSGKTSALLRNIEDAIADNGNALLDVWMSHGDKVTTIPADFTTIAQTATCPHAAMANEAKRFYGVQFHPEVTHTRQGARMLEHFVKDICGCECLWTPATIIDDAVARIREQVGDDEVILGLSGGVDSSVVAMLVHRAIGDRLTCVFVDNGLLRLNEGQQVMEMFGDHFGLNIVKVDAEERFLSALAGEDEPEAKRKIIGRVFVEVFDDEAKKLKNARWLAQGTIYPDVIESAASKTGKAHVIKSHHNVGGLPEEMKMGLVEPLRELFKDEVRRVGLELGLPYDMLYRHPFPGPGLGVRVLGEVKKEYCDLLRKADAVFIEELRKADLYNQVSQAFAVFLPVRSVGVMGDGRKYDWVIALRAVETIDFMTAHWAHLPYDFLGHVSNRIINEINGISRVVYDVSGKPPATIEWE.

The 203-residue stretch at 9-211 folds into the Glutamine amidotransferase type-1 domain; sequence RILILDFGSQ…VKDICGCECL (203 aa). Residue Cys-86 is the Nucleophile of the active site. Active-site residues include His-185 and Glu-187. The GMPS ATP-PPase domain maps to 212 to 404; it reads WTPATIIDDA…LGLPYDMLYR (193 aa). 239–245 is a binding site for ATP; it reads SGGVDSS.

Homodimer.

The enzyme catalyses XMP + L-glutamine + ATP + H2O = GMP + L-glutamate + AMP + diphosphate + 2 H(+). It functions in the pathway purine metabolism; GMP biosynthesis; GMP from XMP (L-Gln route): step 1/1. Its function is as follows. Catalyzes the synthesis of GMP from XMP. The chain is GMP synthase [glutamine-hydrolyzing] from Aeromonas hydrophila subsp. hydrophila (strain ATCC 7966 / DSM 30187 / BCRC 13018 / CCUG 14551 / JCM 1027 / KCTC 2358 / NCIMB 9240 / NCTC 8049).